A 298-amino-acid polypeptide reads, in one-letter code: Aspartate carbamoyltransferase catalytic subunit (298 aa).

Carbamoyl phosphate-binding residues include Arg50 and Thr51. Lys79 is a binding site for L-aspartate. Carbamoyl phosphate contacts are provided by Arg100, His128, and Gln131. Arg160 and Arg221 together coordinate L-aspartate. Carbamoyl phosphate is bound by residues Leu260 and Pro261.

Belongs to the aspartate/ornithine carbamoyltransferase superfamily. ATCase family. In terms of assembly, heterooligomer of catalytic and regulatory chains.

It carries out the reaction carbamoyl phosphate + L-aspartate = N-carbamoyl-L-aspartate + phosphate + H(+). Its pathway is pyrimidine metabolism; UMP biosynthesis via de novo pathway; (S)-dihydroorotate from bicarbonate: step 2/3. Its function is as follows. Catalyzes the condensation of carbamoyl phosphate and aspartate to form carbamoyl aspartate and inorganic phosphate, the committed step in the de novo pyrimidine nucleotide biosynthesis pathway. In Methanosphaerula palustris (strain ATCC BAA-1556 / DSM 19958 / E1-9c), this protein is Aspartate carbamoyltransferase catalytic subunit.